The following is a 126-amino-acid chain: Holo-[acyl-carrier-protein] synthase (126 aa).

Mg(2+)-binding residues include aspartate 9 and glutamate 58.

It belongs to the P-Pant transferase superfamily. AcpS family. Mg(2+) serves as cofactor.

It is found in the cytoplasm. The catalysed reaction is apo-[ACP] + CoA = holo-[ACP] + adenosine 3',5'-bisphosphate + H(+). Transfers the 4'-phosphopantetheine moiety from coenzyme A to a Ser of acyl-carrier-protein. This chain is Holo-[acyl-carrier-protein] synthase, found in Pectobacterium atrosepticum (strain SCRI 1043 / ATCC BAA-672) (Erwinia carotovora subsp. atroseptica).